The primary structure comprises 239 residues: Sugar fermentation stimulation protein homolog (239 aa).

The protein belongs to the SfsA family.

This chain is Sugar fermentation stimulation protein homolog, found in Microcystis aeruginosa (strain NIES-843 / IAM M-2473).